The sequence spans 428 residues: Zinc-type alcohol dehydrogenase B (428 aa).

Zn(2+) is bound by residues Cys116, His137, Cys167, Cys170, Cys173, and Cys181. Lys393 is subject to N6-benzoyllysine.

The protein belongs to the zinc-containing alcohol dehydrogenase family. Class-III subfamily. As to quaternary structure, homodimer. The cofactor is Zn(2+). Post-translationally, benzoylation at lys-393 by gcnE leads to the activation od adhB.

It carries out the reaction a primary alcohol + NAD(+) = an aldehyde + NADH + H(+). It catalyses the reaction a secondary alcohol + NAD(+) = a ketone + NADH + H(+). Its function is as follows. Zinc-type alcohol dehydrogenase involved in development, secondary metabolism, pathogenicity, and stress response. Specifically controls the formation of sclerotia and the biosynthesis of aflatoxin. Contribute to seed colonization of A flavus on host maize seed. The sequence is that of Zinc-type alcohol dehydrogenase B from Aspergillus flavus (strain ATCC 200026 / FGSC A1120 / IAM 13836 / NRRL 3357 / JCM 12722 / SRRC 167).